Consider the following 295-residue polypeptide: Apolipoprotein E (295 aa).

The signal sequence occupies residues 1–18 (MKVLWAALLVTFLAGCQA). A run of 6 repeats spans residues 80 to 101 (TLMDETMKELKAYKSELEEQLS), 102 to 123 (PVAEETRARLSKELQAAQARLG), 124 to 145 (ADMEDVRSRLVQYRSEVQAMLG), 146 to 167 (QSTEELRARLASHLRKLRKRLL), 193 to 211 (TVGSLASQPLQERAQAKLR), and 212 to 233 (ARMEEMGSRTRDRLDEVKEQVA). The interval 80 to 233 (TLMDETMKEL…RLDEVKEQVA (154 aa)) is 6 X 22 AA approximate tandem repeats. Methionine 143 is modified (methionine sulfoxide). Residue serine 147 is modified to Phosphoserine. Residues 158 to 168 (HLRKLRKRLLR) are LDL and other lipoprotein receptors binding. 162-165 (LRKR) is a binding site for heparin. Residues 191–268 (AATVGSLASQ…SWFEPLVEDM (78 aa)) form a lipid-binding and lipoprotein association region. Residues 244-295 (QQISLQAEAFQARLKSWFEPLVEDMQRQWAGLVEKVQAAVGASTAPVPSDNH) form a homooligomerization region. A specificity for association with VLDL region spans residues 256–268 (RLKSWFEPLVEDM).

This sequence belongs to the apolipoprotein A1/A4/E family. Homotetramer. May interact with ABCA1; functionally associated with ABCA1 in the biogenesis of HDLs. May interact with APP/A4 amyloid-beta peptide; the interaction is extremely stable in vitro but its physiological significance is unclear. May interact with MAPT. May interact with MAP2. In the cerebrospinal fluid, interacts with secreted SORL1. Interacts with PMEL; this allows the loading of PMEL luminal fragment on ILVs to induce fibril nucleation. APOE exists as multiple glycosylated and sialylated glycoforms within cells and in plasma. The extent of glycosylation and sialylation are tissue and context specific. In terms of processing, glycated in plasma VLDL. Post-translationally, phosphorylated by FAM20C in the extracellular medium.

The protein resides in the secreted. It localises to the extracellular space. The protein localises to the extracellular matrix. It is found in the extracellular vesicle. Its subcellular location is the endosome. The protein resides in the multivesicular body. APOE is an apolipoprotein, a protein associating with lipid particles, that mainly functions in lipoprotein-mediated lipid transport between organs via the plasma and interstitial fluids. APOE is a core component of plasma lipoproteins and is involved in their production, conversion and clearance. Apolipoproteins are amphipathic molecules that interact both with lipids of the lipoprotein particle core and the aqueous environment of the plasma. As such, APOE associates with chylomicrons, chylomicron remnants, very low density lipoproteins (VLDL) and intermediate density lipoproteins (IDL) but shows a preferential binding to high-density lipoproteins (HDL). It also binds a wide range of cellular receptors including the LDL receptor/LDLR, the LDL receptor-related proteins LRP1, LRP2 and LRP8 and the very low-density lipoprotein receptor/VLDLR that mediate the cellular uptake of the APOE-containing lipoprotein particles. Finally, APOE also has a heparin-binding activity and binds heparan-sulfate proteoglycans on the surface of cells, a property that supports the capture and the receptor-mediated uptake of APOE-containing lipoproteins by cells. A main function of APOE is to mediate lipoprotein clearance through the uptake of chylomicrons, VLDLs, and HDLs by hepatocytes. APOE is also involved in the biosynthesis by the liver of VLDLs as well as their uptake by peripheral tissues ensuring the delivery of triglycerides and energy storage in muscle, heart and adipose tissues. By participating in the lipoprotein-mediated distribution of lipids among tissues, APOE plays a critical role in plasma and tissues lipid homeostasis. APOE is also involved in two steps of reverse cholesterol transport, the HDLs-mediated transport of cholesterol from peripheral tissues to the liver, and thereby plays an important role in cholesterol homeostasis. First, it is functionally associated with ABCA1 in the biogenesis of HDLs in tissues. Second, it is enriched in circulating HDLs and mediates their uptake by hepatocytes. APOE also plays an important role in lipid transport in the central nervous system, regulating neuron survival and sprouting. The chain is Apolipoprotein E (APOE) from Macaca mulatta (Rhesus macaque).